We begin with the raw amino-acid sequence, 516 residues long: 2,3-bisphosphoglycerate-independent phosphoglycerate mutase (516 aa).

The Mn(2+) site is built by Asp-13 and Ser-63. Ser-63 acts as the Phosphoserine intermediate in catalysis. Residues His-124, 154 to 155 (RD), Arg-186, Arg-192, 262 to 265 (RPDR), and Lys-337 each bind substrate. Residues Asp-404, His-408, Asp-445, His-446, and His-464 each contribute to the Mn(2+) site.

It belongs to the BPG-independent phosphoglycerate mutase family. Monomer. The cofactor is Mn(2+).

It catalyses the reaction (2R)-2-phosphoglycerate = (2R)-3-phosphoglycerate. It participates in carbohydrate degradation; glycolysis; pyruvate from D-glyceraldehyde 3-phosphate: step 3/5. Functionally, catalyzes the interconversion of 2-phosphoglycerate and 3-phosphoglycerate. The sequence is that of 2,3-bisphosphoglycerate-independent phosphoglycerate mutase from Cellvibrio japonicus (strain Ueda107) (Pseudomonas fluorescens subsp. cellulosa).